A 652-amino-acid chain; its full sequence is Nucleolar GTP-binding protein 1 (652 aa).

One can recognise an OBG-type G domain in the interval 169 to 341; the sequence is RTIIICGFPN…VKTEACERLL (173 aa). GTP-binding positions include 175 to 182, 221 to 225, and 289 to 292; these read GFPNVGKS, DTPGI, and NKID. Residues 501 to 521 form a disordered region; it reads RLSSRKNKPVIPRNKQPKVRD.

Belongs to the TRAFAC class OBG-HflX-like GTPase superfamily. OBG GTPase family. NOG subfamily.

The protein localises to the nucleus. Its subcellular location is the nucleolus. In terms of biological role, involved in the biogenesis of the 60S ribosomal subunit. Required for normal assembly of the mitotic spindle. May be involved in both centrosome-dependent and centrosome-independent spindle assembly programs. Acts as a TP53 repressor, preventing TP53 stabilization and cell cycle arrest. This is Nucleolar GTP-binding protein 1 from Drosophila melanogaster (Fruit fly).